Here is a 232-residue protein sequence, read N- to C-terminus: N-(5'-phosphoribosyl)anthranilate isomerase (232 aa).

The protein belongs to the TrpF family.

It carries out the reaction N-(5-phospho-beta-D-ribosyl)anthranilate = 1-(2-carboxyphenylamino)-1-deoxy-D-ribulose 5-phosphate. The protein operates within amino-acid biosynthesis; L-tryptophan biosynthesis; L-tryptophan from chorismate: step 3/5. This chain is N-(5'-phosphoribosyl)anthranilate isomerase (TRP1), found in Wickerhamomyces anomalus (Yeast).